Consider the following 67-residue polypeptide: Guanine nucleotide-binding protein G(I)/G(S)/G(O) subunit gamma-13 (67 aa).

Cysteine 64 is subject to Cysteine methyl ester. Cysteine 64 carries S-farnesyl cysteine lipidation. A propeptide spans 65-67 (removed in mature form); sequence TIL.

It belongs to the G protein gamma family. As to quaternary structure, g proteins are composed of 3 units, alpha, beta and gamma.

The protein localises to the cell membrane. Its function is as follows. Guanine nucleotide-binding proteins (G proteins) are involved as a modulator or transducer in various transmembrane signaling systems. The beta and gamma chains are required for the GTPase activity, for replacement of GDP by GTP, and for G protein-effector interaction. In Mus musculus (Mouse), this protein is Guanine nucleotide-binding protein G(I)/G(S)/G(O) subunit gamma-13 (Gng13).